The following is a 101-amino-acid chain: Anti-sigma factor RshA (101 aa).

The interval 9 to 15 (DAHADHD) is inhibits SigH sigma factor activity. Residue Cys23 coordinates iron-sulfur cluster. Inhibits SigH sigma factor activity stretches follow at residues 28–34 (AEVWTLL) and 38–44 (CTPETRE). His49, Cys53, and Cys56 together coordinate iron-sulfur cluster. Residue Thr94 is modified to Phosphothreonine.

It belongs to the zinc-associated anti-sigma factor (ZAS) superfamily. As to quaternary structure, interacts with cognate sigma factor SigH under reducing conditions. Binding inhibits the interaction of SigH with the RNA polymerase catalytic core. Iron-sulfur cluster serves as cofactor. Phosphorylated, probably by PknB. Phosphorylation decreases interaction with SigH, leading to increased SigH-mediated transcription.

An redox-regulated anti-sigma factor for extracytoplasmic function (ECF) sigma factor SigH. ECF sigma factors are held in an inactive form by a cognate anti-sigma factor. RshA and some peptides derived from it inhibit the sigma factor activity of SigH. Probably releases SigH during oxidative stress. The polypeptide is Anti-sigma factor RshA (rshA) (Mycobacterium tuberculosis (strain CDC 1551 / Oshkosh)).